The chain runs to 457 residues: Glycine receptor subunit alpha-1 (457 aa).

An N-terminal signal peptide occupies residues 1–28; that stretch reads MYSFNTLRFYLWETIVFFSLAASKEAEA. Topologically, residues 29-250 are extracellular; sequence ARSAPKPMSP…RFHLERQMGY (222 aa). N66 carries N-linked (GlcNAc...) asparagine glycosylation. Positions 93 and 157 each coordinate glycine. A disulfide bridge links C166 with C180. Residues E220 and D222 each contribute to the Zn(2+) site. C226 and C237 are disulfide-bonded. A strychnine-binding site is contributed by 230–235; the sequence is YNTGKF. T232 contributes to the glycine binding site. H243 contacts Zn(2+). The chain crosses the membrane as a helical span at residues 251 to 272; the sequence is YLIQMYIPSLLIVILSWISFWI. The Cytoplasmic portion of the chain corresponds to 273-277; the sequence is NMDAA. The chain crosses the membrane as a helical span at residues 278–298; that stretch reads PARVGLGITTVLTMTTQSSGS. Residues 299–309 lie on the Extracellular side of the membrane; that stretch reads RASLPKVSYVK. Residues 310-330 traverse the membrane as a helical segment; sequence AIDIWMAVCLLFVFSALLEYA. The Cytoplasmic segment spans residues 331-425; it reads AVNFVSRQHK…FIQRAKKIDK (95 aa). The tract at residues 391 to 410 is disordered; sequence KGANNNNTTNPPPAPSKSPE. A helical membrane pass occupies residues 426–446; that stretch reads ISRIGFPMAFLIFNMFYWIIY. The Extracellular portion of the chain corresponds to 447–457; it reads KIVRREDVHNK.

This sequence belongs to the ligand-gated ion channel (TC 1.A.9) family. Glycine receptor (TC 1.A.9.3) subfamily. GLRA1 sub-subfamily. Interacts with GLRB to form heteropentameric channels; this is probably the predominant form in vivo. Heteropentamer composed of four GLRA1 subunits and one GLRB subunit. Heteropentamer composed of two GLRA1 and three GLRB. Heteropentamer composed of three GLRA1 and two GLRB. Homopentamer (in vitro). Both homopentamers and heteropentamers form functional ion channels, but their characteristics are subtly different. In terms of tissue distribution, detected in spinal cord neurons. Detected in brain stem neurons. Detected at lower levels in hippocampus and cerebellum. Detected in the inner plexiform layer of the retina (at protein level).

The protein resides in the postsynaptic cell membrane. The protein localises to the synapse. It localises to the perikaryon. Its subcellular location is the cell projection. It is found in the dendrite. The protein resides in the cell membrane. It catalyses the reaction chloride(in) = chloride(out). With respect to regulation, channel opening is triggered by extracellular glycine. Channel characteristics depend on the subunit composition; heteropentameric channels are activated by lower glycine levels and display faster desensitization. Channel opening is also triggered by taurine and beta-alanine. Inhibited by strychnine. Strychnine binding locks the channel in a closed conformation and prevents channel opening in response to extracellular glycine. Inhibited by picrotoxin. Channel activity is enhanced by 5 uM Zn(2+) and inhibited by 100 uM Zn(2+). Its function is as follows. Subunit of heteromeric glycine-gated chloride channels. Plays an important role in the down-regulation of neuronal excitability. Contributes to the generation of inhibitory postsynaptic currents. Channel activity is potentiated by ethanol. Potentiation of channel activity by intoxicating levels of ethanol contribute to the sedative effects of ethanol. The chain is Glycine receptor subunit alpha-1 (Glra1) from Mus musculus (Mouse).